The primary structure comprises 418 residues: NADH-quinone oxidoreductase subunit D (418 aa).

This sequence belongs to the complex I 49 kDa subunit family. NDH-1 is composed of 14 different subunits. Subunits NuoB, C, D, E, F, and G constitute the peripheral sector of the complex.

The protein localises to the cell inner membrane. The catalysed reaction is a quinone + NADH + 5 H(+)(in) = a quinol + NAD(+) + 4 H(+)(out). Functionally, NDH-1 shuttles electrons from NADH, via FMN and iron-sulfur (Fe-S) centers, to quinones in the respiratory chain. The immediate electron acceptor for the enzyme in this species is believed to be ubiquinone. Couples the redox reaction to proton translocation (for every two electrons transferred, four hydrogen ions are translocated across the cytoplasmic membrane), and thus conserves the redox energy in a proton gradient. The chain is NADH-quinone oxidoreductase subunit D from Bordetella avium (strain 197N).